The primary structure comprises 361 residues: Protein RecA (361 aa).

ATP is bound at residue 77 to 84; it reads GPESSGKT.

Belongs to the RecA family.

The protein resides in the cytoplasm. Functionally, can catalyze the hydrolysis of ATP in the presence of single-stranded DNA, the ATP-dependent uptake of single-stranded DNA by duplex DNA, and the ATP-dependent hybridization of homologous single-stranded DNAs. It interacts with LexA causing its activation and leading to its autocatalytic cleavage. This Brucella anthropi (strain ATCC 49188 / DSM 6882 / CCUG 24695 / JCM 21032 / LMG 3331 / NBRC 15819 / NCTC 12168 / Alc 37) (Ochrobactrum anthropi) protein is Protein RecA.